The sequence spans 664 residues: L-type lectin-domain containing receptor kinase I.3 (664 aa).

The first 21 residues, 1–21 (MACRLYLALIFSCVYLICLSS), serve as a signal peptide directing secretion. Topologically, residues 22–286 (QQETGFVYNG…PKEEKKKLSP (265 aa)) are extracellular. The tract at residues 24-257 (ETGFVYNGFE…NHYILGWSFS (234 aa)) is legume-lectin like. N-linked (GlcNAc...) asparagine glycans are attached at residues Asn-55, Asn-125, Asn-128, Asn-181, Asn-204, Asn-225, and Asn-267. The chain crosses the membrane as a helical span at residues 287-307 (LLIGLVILLVIPVVMVLGGVY). The Cytoplasmic segment spans residues 308-664 (WYRRKKYAEV…THTILDGHGR (357 aa)). Residues 342–619 (FRKDCRVGKG…LNQDLPLPIF (278 aa)) enclose the Protein kinase domain. ATP is bound by residues 348–356 (VGKGGFGEV) and Lys-370. The active-site Proton acceptor is the Asp-466.

In the C-terminal section; belongs to the protein kinase superfamily. Ser/Thr protein kinase family. It in the N-terminal section; belongs to the leguminous lectin family. In terms of processing, autophosphorylated on Ser and Thr residues. Mostly expressed in roots and flowers, and, to a lower extent, in leaves.

The protein localises to the cell membrane. The enzyme catalyses L-seryl-[protein] + ATP = O-phospho-L-seryl-[protein] + ADP + H(+). It catalyses the reaction L-threonyl-[protein] + ATP = O-phospho-L-threonyl-[protein] + ADP + H(+). Involved in resistance response to the pathogenic fungus Alternaria brassicicola. This chain is L-type lectin-domain containing receptor kinase I.3, found in Arabidopsis thaliana (Mouse-ear cress).